Consider the following 487-residue polypeptide: Protein nucleotidyltransferase YdiU (487 aa).

The ATP site is built by glycine 86, glycine 88, arginine 89, lysine 109, aspartate 121, glycine 122, arginine 172, and arginine 179. Aspartate 248 (proton acceptor) is an active-site residue. Residues asparagine 249 and aspartate 258 each coordinate Mg(2+). Aspartate 258 contributes to the ATP binding site.

It belongs to the SELO family. Mg(2+) is required as a cofactor. Mn(2+) serves as cofactor.

It catalyses the reaction L-seryl-[protein] + ATP = 3-O-(5'-adenylyl)-L-seryl-[protein] + diphosphate. It carries out the reaction L-threonyl-[protein] + ATP = 3-O-(5'-adenylyl)-L-threonyl-[protein] + diphosphate. The enzyme catalyses L-tyrosyl-[protein] + ATP = O-(5'-adenylyl)-L-tyrosyl-[protein] + diphosphate. The catalysed reaction is L-histidyl-[protein] + UTP = N(tele)-(5'-uridylyl)-L-histidyl-[protein] + diphosphate. It catalyses the reaction L-seryl-[protein] + UTP = O-(5'-uridylyl)-L-seryl-[protein] + diphosphate. It carries out the reaction L-tyrosyl-[protein] + UTP = O-(5'-uridylyl)-L-tyrosyl-[protein] + diphosphate. Nucleotidyltransferase involved in the post-translational modification of proteins. It can catalyze the addition of adenosine monophosphate (AMP) or uridine monophosphate (UMP) to a protein, resulting in modifications known as AMPylation and UMPylation. This Sphingopyxis alaskensis (strain DSM 13593 / LMG 18877 / RB2256) (Sphingomonas alaskensis) protein is Protein nucleotidyltransferase YdiU.